A 99-amino-acid chain; its full sequence is Malonate decarboxylase acyl carrier protein (99 aa).

At S25 the chain carries O-(phosphoribosyl dephospho-coenzyme A)serine.

This sequence belongs to the MdcC family. In terms of processing, covalently binds the prosthetic group of malonate decarboxylase.

The protein localises to the cytoplasm. Its function is as follows. Subunit of malonate decarboxylase, it is an acyl carrier protein to which acetyl and malonyl thioester residues are bound via a 2'-(5''-phosphoribosyl)-3'-dephospho-CoA prosthetic group and turn over during the catalytic mechanism. The chain is Malonate decarboxylase acyl carrier protein from Pseudomonas aeruginosa (strain UCBPP-PA14).